The sequence spans 159 residues: Urease accessory protein UreE (159 aa).

The protein belongs to the UreE family.

The protein localises to the cytoplasm. In terms of biological role, involved in urease metallocenter assembly. Binds nickel. Probably functions as a nickel donor during metallocenter assembly. The sequence is that of Urease accessory protein UreE from Acinetobacter baylyi (strain ATCC 33305 / BD413 / ADP1).